Reading from the N-terminus, the 155-residue chain is Anaerobic ribonucleoside-triphosphate reductase-activating protein (155 aa).

Cys26, Cys30, and Cys33 together coordinate [4Fe-4S] cluster. S-adenosyl-L-methionine contacts are provided by residues 32–34 (GCY) and Gly74.

The protein belongs to the organic radical-activating enzymes family. Forms a tetramer composed of two NrdD and two NrdG subunits. [4Fe-4S] cluster serves as cofactor.

It localises to the cytoplasm. The enzyme catalyses glycyl-[protein] + reduced [flavodoxin] + S-adenosyl-L-methionine = glycin-2-yl radical-[protein] + semiquinone [flavodoxin] + 5'-deoxyadenosine + L-methionine + H(+). Functionally, activation of anaerobic ribonucleoside-triphosphate reductase under anaerobic conditions by generation of an organic free radical, using S-adenosylmethionine and reduced flavodoxin as cosubstrates to produce 5'-deoxy-adenosine. This Haemophilus influenzae (strain ATCC 51907 / DSM 11121 / KW20 / Rd) protein is Anaerobic ribonucleoside-triphosphate reductase-activating protein (nrdG).